A 381-amino-acid chain; its full sequence is Probable tRNA sulfurtransferase (381 aa).

A THUMP domain is found at 68-176; it reads DLALKLLKKV…NDGAYIFTEK (109 aa). ATP is bound by residues 194–195, lysine 276, glycine 298, and glutamine 307; that span reads LI.

Belongs to the ThiI family.

It is found in the cytoplasm. The enzyme catalyses [ThiI sulfur-carrier protein]-S-sulfanyl-L-cysteine + a uridine in tRNA + 2 reduced [2Fe-2S]-[ferredoxin] + ATP + H(+) = [ThiI sulfur-carrier protein]-L-cysteine + a 4-thiouridine in tRNA + 2 oxidized [2Fe-2S]-[ferredoxin] + AMP + diphosphate. The catalysed reaction is [ThiS sulfur-carrier protein]-C-terminal Gly-Gly-AMP + S-sulfanyl-L-cysteinyl-[cysteine desulfurase] + AH2 = [ThiS sulfur-carrier protein]-C-terminal-Gly-aminoethanethioate + L-cysteinyl-[cysteine desulfurase] + A + AMP + 2 H(+). It participates in cofactor biosynthesis; thiamine diphosphate biosynthesis. Catalyzes the ATP-dependent transfer of a sulfur to tRNA to produce 4-thiouridine in position 8 of tRNAs, which functions as a near-UV photosensor. Also catalyzes the transfer of sulfur to the sulfur carrier protein ThiS, forming ThiS-thiocarboxylate. This is a step in the synthesis of thiazole, in the thiamine biosynthesis pathway. The sulfur is donated as persulfide by IscS. The sequence is that of Probable tRNA sulfurtransferase from Methanocaldococcus jannaschii (strain ATCC 43067 / DSM 2661 / JAL-1 / JCM 10045 / NBRC 100440) (Methanococcus jannaschii).